The following is a 92-amino-acid chain: Small ribosomal subunit protein uS17 (92 aa).

It belongs to the universal ribosomal protein uS17 family. In terms of assembly, part of the 30S ribosomal subunit.

Functionally, one of the primary rRNA binding proteins, it binds specifically to the 5'-end of 16S ribosomal RNA. The sequence is that of Small ribosomal subunit protein uS17 from Corynebacterium glutamicum (strain ATCC 13032 / DSM 20300 / JCM 1318 / BCRC 11384 / CCUG 27702 / LMG 3730 / NBRC 12168 / NCIMB 10025 / NRRL B-2784 / 534).